A 704-amino-acid polypeptide reads, in one-letter code: Elongation factor G (704 aa).

The 284-residue stretch at 8 to 291 (DRVRNIGIMA…AVIEYLASPV (284 aa)) folds into the tr-type G domain. Residues 17–24 (AHIDAGKT), 90–94 (DTPGH), and 144–147 (NKMD) each bind GTP.

This sequence belongs to the TRAFAC class translation factor GTPase superfamily. Classic translation factor GTPase family. EF-G/EF-2 subfamily.

Its subcellular location is the cytoplasm. Its function is as follows. Catalyzes the GTP-dependent ribosomal translocation step during translation elongation. During this step, the ribosome changes from the pre-translocational (PRE) to the post-translocational (POST) state as the newly formed A-site-bound peptidyl-tRNA and P-site-bound deacylated tRNA move to the P and E sites, respectively. Catalyzes the coordinated movement of the two tRNA molecules, the mRNA and conformational changes in the ribosome. This chain is Elongation factor G, found in Chlorobium chlorochromatii (strain CaD3).